The chain runs to 755 residues: Elongation factor G, mitochondrial (755 aa).

A mitochondrion-targeting transit peptide spans 1–38 (MFKRVGLIAGIAGPVAGSSRFSAVSFSKRAFSASSKRC). Residues 63-344 (KKLRNIGISA…AIVEYLPNPS (282 aa)) enclose the tr-type G domain. GTP is bound by residues 72–79 (AHIDSGKT), 143–147 (DTPGH), and 197–200 (NKMD).

The protein belongs to the TRAFAC class translation factor GTPase superfamily. Classic translation factor GTPase family. EF-G/EF-2 subfamily.

The protein localises to the mitochondrion. The protein operates within protein biosynthesis; polypeptide chain elongation. Its function is as follows. Mitochondrial GTPase that catalyzes the GTP-dependent ribosomal translocation step during translation elongation. During this step, the ribosome changes from the pre-translocational (PRE) to the post-translocational (POST) state as the newly formed A-site-bound peptidyl-tRNA and P-site-bound deacylated tRNA move to the P and E sites, respectively. Catalyzes the coordinated movement of the two tRNA molecules, the mRNA and conformational changes in the ribosome. The sequence is that of Elongation factor G, mitochondrial from Kluyveromyces lactis (strain ATCC 8585 / CBS 2359 / DSM 70799 / NBRC 1267 / NRRL Y-1140 / WM37) (Yeast).